A 378-amino-acid chain; its full sequence is Erythronate-4-phosphate dehydrogenase (378 aa).

Residues Ser45 and Thr66 each contribute to the substrate site. Residues Asp146 and Thr175 each coordinate NAD(+). Residue Arg208 is part of the active site. Asp232 lines the NAD(+) pocket. Glu237 is an active-site residue. The active-site Proton donor is His254. Gly257 serves as a coordination point for NAD(+). Tyr258 contacts substrate.

It belongs to the D-isomer specific 2-hydroxyacid dehydrogenase family. PdxB subfamily. Homodimer.

It is found in the cytoplasm. The enzyme catalyses 4-phospho-D-erythronate + NAD(+) = (R)-3-hydroxy-2-oxo-4-phosphooxybutanoate + NADH + H(+). It functions in the pathway cofactor biosynthesis; pyridoxine 5'-phosphate biosynthesis; pyridoxine 5'-phosphate from D-erythrose 4-phosphate: step 2/5. Functionally, catalyzes the oxidation of erythronate-4-phosphate to 3-hydroxy-2-oxo-4-phosphonooxybutanoate. The polypeptide is Erythronate-4-phosphate dehydrogenase (Escherichia coli (strain K12 / MC4100 / BW2952)).